Here is a 227-residue protein sequence, read N- to C-terminus: Phosphatidylserine decarboxylase proenzyme (227 aa).

The active-site Schiff-base intermediate with substrate; via pyruvic acid is S184. Position 184 is a pyruvic acid (Ser); by autocatalysis (S184).

It belongs to the phosphatidylserine decarboxylase family. PSD-A subfamily. Heterodimer of a large membrane-associated beta subunit and a small pyruvoyl-containing alpha subunit. The cofactor is pyruvate. Is synthesized initially as an inactive proenzyme. Formation of the active enzyme involves a self-maturation process in which the active site pyruvoyl group is generated from an internal serine residue via an autocatalytic post-translational modification. Two non-identical subunits are generated from the proenzyme in this reaction, and the pyruvate is formed at the N-terminus of the alpha chain, which is derived from the carboxyl end of the proenzyme. The post-translation cleavage follows an unusual pathway, termed non-hydrolytic serinolysis, in which the side chain hydroxyl group of the serine supplies its oxygen atom to form the C-terminus of the beta chain, while the remainder of the serine residue undergoes an oxidative deamination to produce ammonia and the pyruvoyl prosthetic group on the alpha chain.

The protein localises to the cell membrane. It catalyses the reaction a 1,2-diacyl-sn-glycero-3-phospho-L-serine + H(+) = a 1,2-diacyl-sn-glycero-3-phosphoethanolamine + CO2. It participates in phospholipid metabolism; phosphatidylethanolamine biosynthesis; phosphatidylethanolamine from CDP-diacylglycerol: step 2/2. Catalyzes the formation of phosphatidylethanolamine (PtdEtn) from phosphatidylserine (PtdSer). This chain is Phosphatidylserine decarboxylase proenzyme, found in Ehrlichia ruminantium (strain Gardel).